Reading from the N-terminus, the 343-residue chain is Vancomycin C-type resistance protein VanC1 (343 aa).

One can recognise an ATP-grasp domain in the interval 134–336; that stretch reads HQLADTMGIA…YEILVEQLIA (203 aa). 164 to 219 serves as a coordination point for ATP; sequence IQDHGFPIFIKPNEAGSSKGITKVTDKTALQSALTTAFAYGSTVLIQKAIAGIEIG. Mg(2+) contacts are provided by D290, E303, and N305. D290, E303, and N305 together coordinate Mn(2+).

The protein belongs to the D-alanine--D-alanine ligase family. Requires Mg(2+) as cofactor. Mn(2+) is required as a cofactor.

It localises to the cell membrane. It catalyses the reaction D-serine + D-alanine + ATP = D-alanyl-D-serine + ADP + phosphate + H(+). Functionally, D-alanine--D-alanine ligase of altered specificity, which catalyzes synthesis of D-Ala-D-Ser; produces a peptidoglycan which does not terminate in D-alanine but in D-serine, thus probably reducing affinity for vancomycin. Together with VanT and VanXYC, required for vancomycin resistance in E.gallinarum strain BM4174. The sequence is that of Vancomycin C-type resistance protein VanC1 from Enterococcus gallinarum.